Reading from the N-terminus, the 33-residue chain is U1-pseudomyrmecitoxin-Pt1 subunit LS2 (33 aa).

It belongs to the myrmexin family. Heterodimer composed of subunit LS2 and subunit SS1, heterodimer composed of subunit LS2 and SS2, and heterodimer composed of subunit LS2 and SS3; disulfide-linked. Expressed by the venom gland.

Its subcellular location is the secreted. This heterodimer may have anti-inflammatory properties, since the myrmexin complex (composed of 6 SS-LS heterodimers) inhibits carrageenin-induced edema in a dose-dependent manner (after subcutaneous injection into rats). The polypeptide is U1-pseudomyrmecitoxin-Pt1 subunit LS2 (Pseudomyrmex triplarinus (Ant)).